The primary structure comprises 391 residues: Ferrochelatase (391 aa).

Histidine 196 and glutamate 281 together coordinate Fe cation.

Belongs to the ferrochelatase family.

Its subcellular location is the cytoplasm. The enzyme catalyses heme b + 2 H(+) = protoporphyrin IX + Fe(2+). It participates in porphyrin-containing compound metabolism; protoheme biosynthesis; protoheme from protoporphyrin-IX: step 1/1. Catalyzes the ferrous insertion into protoporphyrin IX. This chain is Ferrochelatase, found in Prochlorococcus marinus (strain MIT 9312).